We begin with the raw amino-acid sequence, 522 residues long: MVKIAEACLNVLYQHGLSSAQFQFWFERAKHDLLADGMACDAIVAEVMQSMDDHPDAATLFGLLLDEARMGIENDSPYGKAFLENAEKAIRARIAADAFEPLHRLKIAGLYRRAGLPVPDILMLDPEGEGAADEIAMPDLGGVLAVLAAEVEAEGGGAYEFFSGLDEMTAGMPEGAKAGFIHHLMSLDNPFLERCALYWLVSGAALTREAVADGLRERLMRGELQPETASYLPIIRGWLPASAARAAIDDIGKLSRRQGLADASNQNRAEPIVSDIMATTADGVGAQGLTIVGKLQARTFVAMILLKTGYGIKDAFVIRCRSKSEATNIVSYARQEANSVKIDRMTAELLLEAALADGMKNGHPPAPGFIDVIEACSLSQLRPQERDLQALLEHVDPQKEIQNATAAELNRMLRNASALDALVPFTDSWFEDTGETRGIIQGSRSVRTVEKRIWAFLEGRRDIWARRFLQTAIILKSAKKERMSKALAAAAFAVMHKHPLQDIPLMKDIAMTTLDAGGGSPW.

This is an uncharacterized protein from Sinorhizobium fredii (strain NBRC 101917 / NGR234).